A 491-amino-acid polypeptide reads, in one-letter code: Glutamyl-tRNA(Gln) amidotransferase subunit A (491 aa).

Catalysis depends on charge relay system residues lysine 79 and serine 154. Serine 178 functions as the Acyl-ester intermediate in the catalytic mechanism.

The protein belongs to the amidase family. GatA subfamily. As to quaternary structure, heterotrimer of A, B and C subunits.

It carries out the reaction L-glutamyl-tRNA(Gln) + L-glutamine + ATP + H2O = L-glutaminyl-tRNA(Gln) + L-glutamate + ADP + phosphate + H(+). Allows the formation of correctly charged Gln-tRNA(Gln) through the transamidation of misacylated Glu-tRNA(Gln) in organisms which lack glutaminyl-tRNA synthetase. The reaction takes place in the presence of glutamine and ATP through an activated gamma-phospho-Glu-tRNA(Gln). The protein is Glutamyl-tRNA(Gln) amidotransferase subunit A of Synechococcus sp. (strain CC9902).